The chain runs to 140 residues: VapC ribonuclease Y4jK (140 aa).

Residues 2–135 enclose the PINc domain; sequence IVLDTNVISE…FEAAGLDIIN (134 aa). Residues D5 and D104 each contribute to the Mg(2+) site.

This sequence belongs to the PINc/VapC protein family. Mg(2+) serves as cofactor.

Its function is as follows. Toxic component of a type II toxin-antitoxin (TA) system. An RNase. Involved in plasmid stability. The polypeptide is VapC ribonuclease Y4jK (Sinorhizobium fredii (strain NBRC 101917 / NGR234)).